The primary structure comprises 183 residues: Ribosome maturation factor RimM (183 aa).

The PRC barrel domain occupies 96 to 171 (PDEFYDHELE…VALIDPPEGL (76 aa)).

It belongs to the RimM family. As to quaternary structure, binds ribosomal protein uS19.

The protein resides in the cytoplasm. An accessory protein needed during the final step in the assembly of 30S ribosomal subunit, possibly for assembly of the head region. Essential for efficient processing of 16S rRNA. May be needed both before and after RbfA during the maturation of 16S rRNA. It has affinity for free ribosomal 30S subunits but not for 70S ribosomes. In Rhodococcus jostii (strain RHA1), this protein is Ribosome maturation factor RimM.